The chain runs to 205 residues: Ribonuclease HII (205 aa).

An RNase H type-2 domain is found at 15–205 (SQVCGIDEAG…SFKLRKLGEK (191 aa)). Residues Asp-21, Glu-22, and Asp-117 each coordinate a divalent metal cation.

This sequence belongs to the RNase HII family. Mn(2+) is required as a cofactor. The cofactor is Mg(2+).

It is found in the cytoplasm. It carries out the reaction Endonucleolytic cleavage to 5'-phosphomonoester.. Endonuclease that specifically degrades the RNA of RNA-DNA hybrids. This Chlorobaculum tepidum (strain ATCC 49652 / DSM 12025 / NBRC 103806 / TLS) (Chlorobium tepidum) protein is Ribonuclease HII.